Consider the following 141-residue polypeptide: UPF0310 protein SGO_1818 (141 aa).

This sequence belongs to the UPF0310 family.

This Streptococcus gordonii (strain Challis / ATCC 35105 / BCRC 15272 / CH1 / DL1 / V288) protein is UPF0310 protein SGO_1818.